Reading from the N-terminus, the 500-residue chain is NAD(P)H-quinone oxidoreductase chain 4, chloroplastic (500 aa).

14 helical membrane-spanning segments follow: residues 4-24 (FPWLTIIVVFPILTGSLIFLL), 37-57 (LCICILELLLTTYTFCYHFQL), 87-107 (IGPILLTGFITTLATLAAWPV), 111-131 (AQLFHFLMLAMYSGQIGSFSS), 134-154 (LLLFFLMWEFELIPVYLLLSM), 167-187 (FILYTAGGSIFLLIGVLGIGL), 208-228 (ALEVIFYVGFLIAFAVKLPII), 242-262 (HYSTCMLLAGILLKMGAYGLV), 272-292 (AHCLFSPGLIIVGAIQIIYAA), 305-325 (IAYSSISHMGFIIIGIGSLSD), 330-350 (GAILQIISHGFIGAALFFLAG), 386-406 (LALPGLSGFVAELLVFFGIIT), 416-436 (ILIAFLMAIGMILTPIYSLSM), and 462-482 (LFVSISLLLPIIGIGIYPDFV).

It belongs to the complex I subunit 4 family.

It localises to the plastid. Its subcellular location is the chloroplast thylakoid membrane. The enzyme catalyses a plastoquinone + NADH + (n+1) H(+)(in) = a plastoquinol + NAD(+) + n H(+)(out). The catalysed reaction is a plastoquinone + NADPH + (n+1) H(+)(in) = a plastoquinol + NADP(+) + n H(+)(out). The polypeptide is NAD(P)H-quinone oxidoreductase chain 4, chloroplastic (Oenothera parviflora (Small-flowered evening primrose)).